Here is a 212-residue protein sequence, read N- to C-terminus: Protein Nef (212 aa).

A lipid anchor (N-myristoyl glycine; by host) is attached at glycine 2. Serine 6 is subject to Phosphoserine; by host. The interval 67-71 is acidic; interacts with host PACS1 and PACS2; stabilizes the interaction of NEF/MHC-I with host AP1M1; necessary for MHC-I internalization; that stretch reads EESEE. The segment at 75 to 84 is SH3-binding; interaction with Src family tyrosine kinases; that stretch reads PVRPQVPLRP. A PxxP; stabilizes the interaction of NEF/MHC-I with host AP1M1; necessary for MHC-I internalization motif is present at residues 78–81; it reads PQVP. Residues 114 to 130 form a mediates dimerization, Nef-PTE1 interaction region; that stretch reads EILDLWVYNTQGIFPDW. The interval 154-186 is binding to ATP6V1H; sequence VDPREVEEATEGETNCLLHPVCQHGMEDTEREV. A Dileucine internalization motif; necessary for CD4 internalization motif is present at residues 170 to 171; that stretch reads LL. Positions 180–181 match the Diacidic; necessary for CD4 internalization motif; sequence ED.

This sequence belongs to the lentivirus primate group Nef protein family. In terms of assembly, monomer; cytosolic form. Homodimer; membrane bound form. Interacts with Nef associated p21-activated kinase (PAK2); this interaction activates PAK2. Associates with the Nef-MHC-I-AP1 complex; this complex is required for MHC-I internalization. Interacts (via C-terminus) with host PI3-kinase. Interacts with host PACS1; this interaction seems to be weak. Interacts with host PACS2. Interacts with host LCK and MAPK3; these interactions inhibit the kinase activity of the latter. Interacts with host ATP6V1H; this interaction may play a role in CD4 endocytosis. Associates with the CD4-Nef-AP2 complex; this complex is required for CD4 internalization. Interacts with host AP2 subunit alpha and AP2 subunit sigma2. Interacts with TCR-zeta chain; this interaction up-regulates the Fas ligand (FasL) surface expression. Interacts with host HCK, LYN, and SRC; these interactions activate the Src family kinases. Interacts with MAP3K5; this interaction inhibits the Fas and TNFR-mediated death signals. Interacts with beta-COP and PTE1. Interacts with human RACK1; this increases Nef phosphorylation by PKC. Interacts with TP53; this interaction decreases the half-life of TP53, protecting the infected cell against p53-mediated apoptosis. In terms of processing, the virion-associated Nef proteins are cleaved by the viral protease to release the soluble C-terminal core protein. Nef is probably cleaved concomitantly with viral structural proteins on maturation of virus particles. Myristoylated. Post-translationally, phosphorylated on serine residues, probably by host PKCdelta and theta.

The protein resides in the host cell membrane. It localises to the virion. The protein localises to the secreted. It is found in the host Golgi apparatus membrane. Factor of infectivity and pathogenicity, required for optimal virus replication. Alters numerous pathways of T-lymphocyte function and down-regulates immunity surface molecules in order to evade host defense and increase viral infectivity. Alters the functionality of other immunity cells, like dendritic cells, monocytes/macrophages and NK cells. Its function is as follows. In infected CD4(+) T-lymphocytes, down-regulates the surface MHC-I, mature MHC-II, CD4, CD28, CCR5 and CXCR4 molecules. Mediates internalization and degradation of host CD4 through the interaction of with the cytoplasmic tail of CD4, the recruitment of AP-2 (clathrin adapter protein complex 2), internalization through clathrin coated pits, and subsequent transport to endosomes and lysosomes for degradation. Diverts host MHC-I molecules to the trans-Golgi network-associated endosomal compartments by an endocytic pathway to finally target them for degradation. MHC-I down-regulation may involve AP-1 (clathrin adapter protein complex 1) or possibly Src family kinase-ZAP70/Syk-PI3K cascade recruited by PACS2. In consequence infected cells are masked for immune recognition by cytotoxic T-lymphocytes. Decreasing the number of immune receptors also prevents reinfection by more HIV particles (superinfection). Down-regulates host SERINC3 and SERINC5 thereby excluding these proteins from the viral particles. Virion infectivity is drastically higher when SERINC3 or SERINC5 are excluded from the viral envelope, because these host antiviral proteins impair the membrane fusion event necessary for subsequent virion penetration. Functionally, bypasses host T-cell signaling by inducing a transcriptional program nearly identical to that of anti-CD3 cell activation. Interaction with TCR-zeta chain up-regulates the Fas ligand (FasL). Increasing surface FasL molecules and decreasing surface MHC-I molecules on infected CD4(+) cells send attacking cytotoxic CD8+ T-lymphocytes into apoptosis. In terms of biological role, plays a role in optimizing the host cell environment for viral replication without causing cell death by apoptosis. Protects the infected cells from apoptosis in order to keep them alive until the next virus generation is ready to strike. Inhibits the Fas and TNFR-mediated death signals by blocking MAP3K5/ASK1. Decreases the half-life of TP53, protecting the infected cell against p53-mediated apoptosis. Inhibits the apoptotic signals regulated by the Bcl-2 family proteins through the formation of a Nef/PI3-kinase/PAK2 complex that leads to activation of PAK2 and induces phosphorylation of host BAD. Extracellular Nef protein targets CD4(+) T-lymphocytes for apoptosis by interacting with CXCR4 surface receptors. The chain is Protein Nef from Homo sapiens (Human).